A 73-amino-acid chain; its full sequence is Large ribosomal subunit protein bL31 (73 aa).

Cysteine 16, cysteine 18, cysteine 38, and cysteine 41 together coordinate Zn(2+).

The protein belongs to the bacterial ribosomal protein bL31 family. Type A subfamily. In terms of assembly, part of the 50S ribosomal subunit. The cofactor is Zn(2+).

Functionally, binds the 23S rRNA. The chain is Large ribosomal subunit protein bL31 from Vibrio vulnificus (strain YJ016).